The primary structure comprises 128 residues: 3-aminoacrylate deaminase RutC (128 aa).

It belongs to the RutC family.

The enzyme catalyses (Z)-3-aminoacrylate + H2O + H(+) = 3-oxopropanoate + NH4(+). Functionally, involved in pyrimidine catabolism. Catalyzes the deamination of 3-aminoacrylate to malonic semialdehyde, a reaction that can also occur spontaneously. RutC may facilitate the reaction and modulate the metabolic fitness, rather than catalyzing essential functions. The chain is 3-aminoacrylate deaminase RutC from Serratia proteamaculans (strain 568).